We begin with the raw amino-acid sequence, 393 residues long: Flavohemoprotein (393 aa).

A Globin domain is found at 1–139; that stretch reads MLSNAQRALI…LADLLIEAEE (139 aa). Position 85 (H85) interacts with heme b. Residues Y95 and E138 each act as charge relay system in the active site. Residues 150–393 are reductase; sequence GGWRGVRRFR…FFGPAAALDA (244 aa). The 104-residue stretch at 153–256 folds into the FAD-binding FR-type domain; the sequence is RGVRRFRVAR…FPPAGDFVLR (104 aa). FAD-binding positions include Y191 and 205 to 208; that span reads RNYS. An NADP(+)-binding site is contributed by 268-273; it reads GVGITP. 384–387 is a binding site for FAD; sequence FFGP.

The protein belongs to the globin family. Two-domain flavohemoproteins subfamily. This sequence in the C-terminal section; belongs to the flavoprotein pyridine nucleotide cytochrome reductase family. The cofactor is heme b. Requires FAD as cofactor.

It catalyses the reaction 2 nitric oxide + NADPH + 2 O2 = 2 nitrate + NADP(+) + H(+). It carries out the reaction 2 nitric oxide + NADH + 2 O2 = 2 nitrate + NAD(+) + H(+). Its function is as follows. Is involved in NO detoxification in an aerobic process, termed nitric oxide dioxygenase (NOD) reaction that utilizes O(2) and NAD(P)H to convert NO to nitrate, which protects the bacterium from various noxious nitrogen compounds. Therefore, plays a central role in the inducible response to nitrosative stress. This Pseudomonas aeruginosa (strain ATCC 15692 / DSM 22644 / CIP 104116 / JCM 14847 / LMG 12228 / 1C / PRS 101 / PAO1) protein is Flavohemoprotein.